We begin with the raw amino-acid sequence, 289 residues long: Probable 2-keto-3-deoxyxylonate dehydratase (289 aa).

Positions 144, 146, and 164 each coordinate Mg(2+).

This sequence belongs to the FAH family.

It catalyses the reaction 2-dehydro-3-deoxy-D-arabinonate = 2,5-dioxopentanoate + H2O. It participates in carbohydrate metabolism; D-xylose degradation. Its function is as follows. Probable 2-keto-3-deoxyxylonate dehydratase involved in the degradation of D-xylose, a major component of hemicelluloses such as xylan. Catalyzes the fourth reaction in the xylose utilization pathway through dehydratation of 2-dehydro-3-deoxy-D-xylonate into alpha-ketoglutarate semialdehyde (2,5-dioxopentanoate). This chain is Probable 2-keto-3-deoxyxylonate dehydratase, found in Haloferax volcanii (strain ATCC 29605 / DSM 3757 / JCM 8879 / NBRC 14742 / NCIMB 2012 / VKM B-1768 / DS2) (Halobacterium volcanii).